The sequence spans 204 residues: Cobalt-containing nitrile hydratase subunit alpha (204 aa).

Co(2+) is bound by residues Cys-108, Cys-111, Ser-112, and Cys-113. Cys-111 carries the post-translational modification Cysteine sulfinic acid (-SO2H). The residue at position 113 (Cys-113) is a Cysteine sulfenic acid (-SOH).

The protein belongs to the nitrile hydratase subunit alpha family. In terms of assembly, heterotetramer of two alpha and two beta chains. It depends on Co(2+) as a cofactor.

It carries out the reaction an aliphatic primary amide = an aliphatic nitrile + H2O. Functionally, NHase catalyzes the hydration of various nitrile compounds to the corresponding amides. The protein is Cobalt-containing nitrile hydratase subunit alpha of Pseudonocardia thermophila.